A 167-amino-acid chain; its full sequence is Crossover junction endodeoxyribonuclease RuvC (167 aa).

Residues aspartate 7, glutamate 67, and aspartate 140 contribute to the active site. 3 residues coordinate Mg(2+): aspartate 7, glutamate 67, and aspartate 140.

This sequence belongs to the RuvC family. Homodimer which binds Holliday junction (HJ) DNA. The HJ becomes 2-fold symmetrical on binding to RuvC with unstacked arms; it has a different conformation from HJ DNA in complex with RuvA. In the full resolvosome a probable DNA-RuvA(4)-RuvB(12)-RuvC(2) complex forms which resolves the HJ. Requires Mg(2+) as cofactor.

The protein resides in the cytoplasm. The catalysed reaction is Endonucleolytic cleavage at a junction such as a reciprocal single-stranded crossover between two homologous DNA duplexes (Holliday junction).. The RuvA-RuvB-RuvC complex processes Holliday junction (HJ) DNA during genetic recombination and DNA repair. Endonuclease that resolves HJ intermediates. Cleaves cruciform DNA by making single-stranded nicks across the HJ at symmetrical positions within the homologous arms, yielding a 5'-phosphate and a 3'-hydroxyl group; requires a central core of homology in the junction. The consensus cleavage sequence is 5'-(A/T)TT(C/G)-3'. Cleavage occurs on the 3'-side of the TT dinucleotide at the point of strand exchange. HJ branch migration catalyzed by RuvA-RuvB allows RuvC to scan DNA until it finds its consensus sequence, where it cleaves and resolves the cruciform DNA. This Dehalococcoides mccartyi (strain ATCC BAA-2100 / JCM 16839 / KCTC 5957 / BAV1) protein is Crossover junction endodeoxyribonuclease RuvC.